A 415-amino-acid chain; its full sequence is 4-hydroxy-3-methylbut-2-enyl diphosphate reductase (415 aa).

Residue Cys66 participates in [4Fe-4S] cluster binding. Residue His96 coordinates (2E)-4-hydroxy-3-methylbut-2-enyl diphosphate. His96 contacts dimethylallyl diphosphate. Residue His96 participates in isopentenyl diphosphate binding. A [4Fe-4S] cluster-binding site is contributed by Cys158. Position 186 (His186) interacts with (2E)-4-hydroxy-3-methylbut-2-enyl diphosphate. His186 lines the dimethylallyl diphosphate pocket. His186 provides a ligand contact to isopentenyl diphosphate. The Proton donor role is filled by Glu188. Thr259 contributes to the (2E)-4-hydroxy-3-methylbut-2-enyl diphosphate binding site. Residue Cys297 participates in [4Fe-4S] cluster binding. 4 residues coordinate (2E)-4-hydroxy-3-methylbut-2-enyl diphosphate: Ser326, Ser327, Asn328, and Ser388. Dimethylallyl diphosphate contacts are provided by Ser326, Ser327, Asn328, and Ser388. The isopentenyl diphosphate site is built by Ser326, Ser327, Asn328, and Ser388.

It belongs to the IspH family. The cofactor is [4Fe-4S] cluster.

It catalyses the reaction isopentenyl diphosphate + 2 oxidized [2Fe-2S]-[ferredoxin] + H2O = (2E)-4-hydroxy-3-methylbut-2-enyl diphosphate + 2 reduced [2Fe-2S]-[ferredoxin] + 2 H(+). The catalysed reaction is dimethylallyl diphosphate + 2 oxidized [2Fe-2S]-[ferredoxin] + H2O = (2E)-4-hydroxy-3-methylbut-2-enyl diphosphate + 2 reduced [2Fe-2S]-[ferredoxin] + 2 H(+). It participates in isoprenoid biosynthesis; dimethylallyl diphosphate biosynthesis; dimethylallyl diphosphate from (2E)-4-hydroxy-3-methylbutenyl diphosphate: step 1/1. Its pathway is isoprenoid biosynthesis; isopentenyl diphosphate biosynthesis via DXP pathway; isopentenyl diphosphate from 1-deoxy-D-xylulose 5-phosphate: step 6/6. Its function is as follows. Catalyzes the conversion of 1-hydroxy-2-methyl-2-(E)-butenyl 4-diphosphate (HMBPP) into a mixture of isopentenyl diphosphate (IPP) and dimethylallyl diphosphate (DMAPP). Acts in the terminal step of the DOXP/MEP pathway for isoprenoid precursor biosynthesis. This Acaryochloris marina (strain MBIC 11017) protein is 4-hydroxy-3-methylbut-2-enyl diphosphate reductase.